We begin with the raw amino-acid sequence, 475 residues long: Probable 5'-adenylylsulfate reductase 1, chloroplastic (475 aa).

Residues Met1–Ser63 constitute a chloroplast transit peptide. Residues Ala72–Gly327 are reductase domain. Residues His341–Arg475 enclose the Thioredoxin domain. Residues Cys393 and Cys396 each act as nucleophile in the active site. A disulfide bond links Cys393 and Cys396.

This sequence belongs to the APS reductase family. It depends on [4Fe-4S] cluster as a cofactor.

The protein resides in the plastid. It is found in the chloroplast. The enzyme catalyses glutathione disulfide + sulfite + AMP + 2 H(+) = adenosine 5'-phosphosulfate + 2 glutathione. Reduces sulfate for Cys biosynthesis. The sequence is that of Probable 5'-adenylylsulfate reductase 1, chloroplastic (APR1) from Oryza sativa subsp. japonica (Rice).